We begin with the raw amino-acid sequence, 264 residues long: Exodeoxyribonuclease YycJ (264 aa).

A divalent metal cation is bound by residues His-58, His-60, Asp-62, His-63, and Asp-145.

Belongs to the metallo-beta-lactamase superfamily. Fe(2+) is required as a cofactor. Requires Zn(2+) as cofactor. It depends on Mn(2+) as a cofactor.

Its function is as follows. 5'-&gt;3' double-stranded DNA exonuclease. May play a role in mutation mismatch repair (MMR). Required for accurate coordination of cell division with DNA replication. May play a role in cell wall metabolism. The protein is Exodeoxyribonuclease YycJ of Bacillus anthracis.